The chain runs to 198 residues: MLLFVGLGNPGKAYSANRHNIGFMAIDAIAREYGAPAFRARFQGLTSEITLSGEKIVLLKPETYMNESGRSVSDAVHFYKIDASRVIVFHDELDLAPGKVRVKKGGGNAGHNGLKSITQHITNDYRRVRIGIGHPGIKDMVRHYVLGDFSKTESAWVETLCLSIAVNAPLLAKGEDENFQNKIFHAMETAGLAKDGLF.

Tyrosine 14 serves as a coordination point for tRNA. Histidine 19 functions as the Proton acceptor in the catalytic mechanism. TRNA is bound by residues tyrosine 64, asparagine 66, and asparagine 112.

This sequence belongs to the PTH family. In terms of assembly, monomer.

Its subcellular location is the cytoplasm. The catalysed reaction is an N-acyl-L-alpha-aminoacyl-tRNA + H2O = an N-acyl-L-amino acid + a tRNA + H(+). In terms of biological role, hydrolyzes ribosome-free peptidyl-tRNAs (with 1 or more amino acids incorporated), which drop off the ribosome during protein synthesis, or as a result of ribosome stalling. Catalyzes the release of premature peptidyl moieties from peptidyl-tRNA molecules trapped in stalled 50S ribosomal subunits, and thus maintains levels of free tRNAs and 50S ribosomes. This is Peptidyl-tRNA hydrolase from Beijerinckia indica subsp. indica (strain ATCC 9039 / DSM 1715 / NCIMB 8712).